Here is a 259-residue protein sequence, read N- to C-terminus: Hydroxyacylglutathione hydrolase (259 aa).

Zn(2+)-binding residues include H56, H58, D60, H61, H112, D133, and H171.

It belongs to the metallo-beta-lactamase superfamily. Glyoxalase II family. In terms of assembly, monomer. Zn(2+) serves as cofactor.

The enzyme catalyses an S-(2-hydroxyacyl)glutathione + H2O = a 2-hydroxy carboxylate + glutathione + H(+). It functions in the pathway secondary metabolite metabolism; methylglyoxal degradation; (R)-lactate from methylglyoxal: step 2/2. In terms of biological role, thiolesterase that catalyzes the hydrolysis of S-D-lactoyl-glutathione to form glutathione and D-lactic acid. This is Hydroxyacylglutathione hydrolase from Pseudomonas entomophila (strain L48).